We begin with the raw amino-acid sequence, 208 residues long: ATP-dependent Clp protease proteolytic subunit 1 (208 aa).

The active-site Nucleophile is the serine 108. The active site involves histidine 133.

This sequence belongs to the peptidase S14 family. In terms of assembly, fourteen ClpP subunits assemble into 2 heptameric rings which stack back to back to give a disk-like structure with a central cavity, resembling the structure of eukaryotic proteasomes.

The protein resides in the cytoplasm. It carries out the reaction Hydrolysis of proteins to small peptides in the presence of ATP and magnesium. alpha-casein is the usual test substrate. In the absence of ATP, only oligopeptides shorter than five residues are hydrolyzed (such as succinyl-Leu-Tyr-|-NHMec, and Leu-Tyr-Leu-|-Tyr-Trp, in which cleavage of the -Tyr-|-Leu- and -Tyr-|-Trp bonds also occurs).. In terms of biological role, cleaves peptides in various proteins in a process that requires ATP hydrolysis. Has a chymotrypsin-like activity. Plays a major role in the degradation of misfolded proteins. The polypeptide is ATP-dependent Clp protease proteolytic subunit 1 (Corynebacterium efficiens (strain DSM 44549 / YS-314 / AJ 12310 / JCM 11189 / NBRC 100395)).